An 811-amino-acid chain; its full sequence is DEP domain-containing protein 1A (811 aa).

Positions 24 to 108 constitute a DEP domain; sequence FRAGMPLRKH…DNNQLFRFPA (85 aa). The Rho-GAP domain occupies 281 to 321; sequence DYFLDLPEPLLTFEYYELFVNILVVCGYITVSDRSSGIHKI. At Ser512 the chain carries Phosphoserine. Residues 598 to 653 form an interaction with ZNF224 region; sequence AIDALQLCCLLLPPPNRRKLQLLMRMISRMSQNVDMPKLHDAMGTRSLMIHTFSRC.

As to quaternary structure, isoform 2 and isoform 5 can form homodimers and heterodimers. Interacts with ZNF224. In terms of tissue distribution, expressed in testis. Up-regulated in bladder cancer cells (at protein level).

Its subcellular location is the nucleus. Its function is as follows. May be involved in transcriptional regulation as a transcriptional corepressor. The DEPDC1A-ZNF224 complex may play a critical role in bladder carcinogenesis by repressing the transcription of the A20 gene, leading to transport of NF-KB protein into the nucleus, resulting in suppression of apoptosis of bladder cancer cells. This chain is DEP domain-containing protein 1A (DEPDC1), found in Homo sapiens (Human).